We begin with the raw amino-acid sequence, 235 residues long: Orotidine 5'-phosphate decarboxylase (235 aa).

Residues D12, K34, 61 to 70 (DMKLLDIDNT), T116, R177, Q186, and R207 contribute to the substrate site. K63 (proton donor) is an active-site residue.

The protein belongs to the OMP decarboxylase family. Type 1 subfamily. In terms of assembly, homodimer.

It catalyses the reaction orotidine 5'-phosphate + H(+) = UMP + CO2. Its pathway is pyrimidine metabolism; UMP biosynthesis via de novo pathway; UMP from orotate: step 2/2. Its function is as follows. Catalyzes the decarboxylation of orotidine 5'-monophosphate (OMP) to uridine 5'-monophosphate (UMP). This is Orotidine 5'-phosphate decarboxylase from Rhizobium etli (strain CIAT 652).